The following is a 457-amino-acid chain: ATP synthase subunit beta (457 aa).

ATP is bound at residue 147-154; that stretch reads GGAGVGKT.

Belongs to the ATPase alpha/beta chains family. In terms of assembly, F-type ATPases have 2 components, CF(1) - the catalytic core - and CF(0) - the membrane proton channel. CF(1) has five subunits: alpha(3), beta(3), gamma(1), delta(1), epsilon(1). CF(0) has three main subunits: a(1), b(2) and c(9-12). The alpha and beta chains form an alternating ring which encloses part of the gamma chain. CF(1) is attached to CF(0) by a central stalk formed by the gamma and epsilon chains, while a peripheral stalk is formed by the delta and b chains.

The protein localises to the cell inner membrane. The catalysed reaction is ATP + H2O + 4 H(+)(in) = ADP + phosphate + 5 H(+)(out). Functionally, produces ATP from ADP in the presence of a proton gradient across the membrane. The catalytic sites are hosted primarily by the beta subunits. The polypeptide is ATP synthase subunit beta (Histophilus somni (strain 2336) (Haemophilus somnus)).